We begin with the raw amino-acid sequence, 515 residues long: tRNA-2-methylthio-N(6)-dimethylallyladenosine synthase (515 aa).

An MTTase N-terminal domain is found at Lys-25 to His-140. Residues Cys-34, Cys-69, Cys-103, Cys-177, Cys-181, and Cys-184 each coordinate [4Fe-4S] cluster. Positions Arg-163–Glu-393 constitute a Radical SAM core domain. Residues Ala-396–Gly-466 form the TRAM domain. Residues Asp-482 to Ala-515 are disordered. Low complexity predominate over residues Gly-490–Gly-506.

This sequence belongs to the methylthiotransferase family. MiaB subfamily. As to quaternary structure, monomer. The cofactor is [4Fe-4S] cluster.

It localises to the cytoplasm. The enzyme catalyses N(6)-dimethylallyladenosine(37) in tRNA + (sulfur carrier)-SH + AH2 + 2 S-adenosyl-L-methionine = 2-methylsulfanyl-N(6)-dimethylallyladenosine(37) in tRNA + (sulfur carrier)-H + 5'-deoxyadenosine + L-methionine + A + S-adenosyl-L-homocysteine + 2 H(+). In terms of biological role, catalyzes the methylthiolation of N6-(dimethylallyl)adenosine (i(6)A), leading to the formation of 2-methylthio-N6-(dimethylallyl)adenosine (ms(2)i(6)A) at position 37 in tRNAs that read codons beginning with uridine. The polypeptide is tRNA-2-methylthio-N(6)-dimethylallyladenosine synthase (Paenarthrobacter aurescens (strain TC1)).